Consider the following 514-residue polypeptide: MVWEVKTNQMPNAVQKLLLVMDKRASGMNDSLELLQCNENLPSSPGYNSCDEHMELDDLPELQAVQSDPTQSGMYQLSSDVSHQEYPRSSWNQNTSDIPETTYRENEVDWLTELANIATSPQSPLMQCSFYNRSSPVHIIATSKSLHSYARPPPVSSSSKSEPAFPHHHWKEETPVRHERANSESESGIFCMSSLSDDDDLGWCNSWPSTVWHCFLKGTRLCFHKGSNKEWQDVEDFARAEGCDNEEDLQMGIHKGYGSDGLKLLSHEESVSFGESVLKLTFDPGTVEDGLLTVECKLDHPFYVKNKGWSSFYPSLTVVQHGIPCCEVHIGDVCLPPGHPDAINFDDSGVFDTFKSYDFTPMDSSAVYVLSSMARQRRASLSCGGPGGQDFARSGFSKNCGSPGSSQLSSNSLYAKAVKNHSSGTVSATSPNKCKRPMNAFMLFAKKYRVEYTQMYPGKDNRAISVILGDRWKKMKNEERRMYTLEAKALAEEQKRLNPDCWKRKRTNSGSQQH.

A disordered region spans residues 150–182; that stretch reads ARPPPVSSSSKSEPAFPHHHWKEETPVRHERAN. A compositionally biased stretch (basic and acidic residues) spans 170-182; it reads WKEETPVRHERAN. Positions 203 to 345 constitute an AXH domain; the sequence is WCNSWPSTVW…PPGHPDAINF (143 aa). A DNA-binding region (HMG box) is located at residues 434–502; sequence CKRPMNAFML…EQKRLNPDCW (69 aa).

As to quaternary structure, binds the second PAH repeat of SIN3A. Binds TCF4. Binds RB1. Post-translationally, ubiquitinated by the CTLH E3 ubiquitin-protein ligase complex, leading to subsequent proteasomal degradation.

The protein resides in the nucleus. Its function is as follows. Transcriptional repressor that binds to the promoter region of target genes. Plays a role in the regulation of the cell cycle and of the Wnt pathway. Binds preferentially to the sequence 5'-TTCATTCATTCA-3'. Binding to the histone H1.0 promoter is enhanced by interaction with RB1. Disrupts the interaction between DNA and TCF4. The polypeptide is HMG box-containing protein 1 (HBP1) (Homo sapiens (Human)).